The sequence spans 242 residues: 7-cyano-7-deazaguanine synthase (242 aa).

The tract at residues Met-1 to Asp-22 is disordered. Residue Leu-32 to Leu-42 coordinates ATP. The Zn(2+) site is built by Cys-212, Cys-221, Cys-224, and Cys-227.

Belongs to the QueC family. Zn(2+) is required as a cofactor.

The catalysed reaction is 7-carboxy-7-deazaguanine + NH4(+) + ATP = 7-cyano-7-deazaguanine + ADP + phosphate + H2O + H(+). The protein operates within purine metabolism; 7-cyano-7-deazaguanine biosynthesis. In terms of biological role, catalyzes the ATP-dependent conversion of 7-carboxy-7-deazaguanine (CDG) to 7-cyano-7-deazaguanine (preQ(0)). This chain is 7-cyano-7-deazaguanine synthase, found in Leptospira interrogans serogroup Icterohaemorrhagiae serovar copenhageni (strain Fiocruz L1-130).